Here is a 453-residue protein sequence, read N- to C-terminus: Ribulose bisphosphate carboxylase large chain (453 aa).

Positions methionine 1–serine 2 are excised as a propeptide. Proline 3 carries the post-translational modification N-acetylproline. Lysine 14 is modified (N6,N6,N6-trimethyllysine). Substrate contacts are provided by asparagine 123 and threonine 173. Lysine 175 serves as the catalytic Proton acceptor. Lysine 177 lines the substrate pocket. The Mg(2+) site is built by lysine 201, aspartate 203, and glutamate 204. Position 201 is an N6-carboxylysine (lysine 201). Histidine 294 (proton acceptor) is an active-site residue. Substrate-binding residues include arginine 295, histidine 327, and serine 379.

The protein belongs to the RuBisCO large chain family. Type I subfamily. Heterohexadecamer of 8 large chains and 8 small chains; disulfide-linked. The disulfide link is formed within the large subunit homodimers. It depends on Mg(2+) as a cofactor. In terms of processing, the disulfide bond which can form in the large chain dimeric partners within the hexadecamer appears to be associated with oxidative stress and protein turnover.

The protein resides in the plastid. It is found in the chloroplast. It carries out the reaction 2 (2R)-3-phosphoglycerate + 2 H(+) = D-ribulose 1,5-bisphosphate + CO2 + H2O. The enzyme catalyses D-ribulose 1,5-bisphosphate + O2 = 2-phosphoglycolate + (2R)-3-phosphoglycerate + 2 H(+). RuBisCO catalyzes two reactions: the carboxylation of D-ribulose 1,5-bisphosphate, the primary event in carbon dioxide fixation, as well as the oxidative fragmentation of the pentose substrate in the photorespiration process. Both reactions occur simultaneously and in competition at the same active site. The sequence is that of Ribulose bisphosphate carboxylase large chain from Galium elongatum (Great marsh bedstraw).